We begin with the raw amino-acid sequence, 432 residues long: Heme-based aerotactic transducer HemAT (432 aa).

Residues 184–420 enclose the Methyl-accepting transducer domain; that stretch reads YNQTRDEQEE…EVSRAVSHVA (237 aa).

This sequence belongs to the methyl-accepting chemotaxis (MCP) protein family. In terms of assembly, homotetramer.

Heme-containing signal transducer responsible for aerotaxis, the migratory response toward or away from oxygen. This Bacillus subtilis (strain 168) protein is Heme-based aerotactic transducer HemAT (hemAT).